A 273-amino-acid polypeptide reads, in one-letter code: Vacuolar membrane protein YPL162C (273 aa).

Over 1 to 13 (MYVSNGKDTCQLL) the chain is Vacuolar. The helical transmembrane segment at 14-34 (GPVSLFVQTLMGMTAVIVLLV) threads the bilayer. Over 35–51 (KRNYEHPRRKMIVWSYD) the chain is Cytoplasmic. Residues 52–72 (IGKQIIGSLGIHFLNLGISIL) form a helical membrane-spanning segment. Residues 73–97 (KKRRRSLFAITAKGNDDEDQCDWYF) are Vacuolar-facing. The chain crosses the membrane as a helical span at residues 98–118 (LNLLLDTTVGIPILWLCLYII). The Cytoplasmic segment spans residues 119-156 (EKVLKSLHFQNIESGNYFPSKTVGSHPRKPLFSAFVKQ). A helical membrane pass occupies residues 157–177 (LLIFIVGLGVMKFCVFLILNY). At 178-198 (LEDLAYWFADLILGWSDSWPN) the chain is on the vacuolar side. A helical membrane pass occupies residues 199 to 219 (FQVFLVMFVFPILLNCFQYFC). Topologically, residues 220–273 (VDNVIRLHSESLTITNAENFETNTFLNDEIPDLSEVSNEVPNKDNNISSYGSII) are cytoplasmic.

It localises to the vacuole membrane. The polypeptide is Vacuolar membrane protein YPL162C (Saccharomyces cerevisiae (strain ATCC 204508 / S288c) (Baker's yeast)).